We begin with the raw amino-acid sequence, 389 residues long: Chalcone synthase 3 (389 aa).

Residue C164 is part of the active site.

This sequence belongs to the thiolase-like superfamily. Chalcone/stilbene synthases family.

It carries out the reaction (E)-4-coumaroyl-CoA + 3 malonyl-CoA + 3 H(+) = 2',4,4',6'-tetrahydroxychalcone + 3 CO2 + 4 CoA. Its pathway is secondary metabolite biosynthesis; flavonoid biosynthesis. The primary product of this enzyme is 4,2',4',6'-tetrahydroxychalcone (also termed naringenin-chalcone or chalcone) which can under specific conditions spontaneously isomerize into naringenin. The chain is Chalcone synthase 3 (CHS3) from Trifolium subterraneum (Subterranean clover).